A 527-amino-acid chain; its full sequence is Catalase (527 aa).

Ala-2 carries the post-translational modification N-acetylalanine. Ser-9 carries the post-translational modification Phosphoserine. Active-site residues include His-75 and Asn-148. Residues His-194, Ser-201, Arg-203, and Asn-213 each coordinate NADP(+). At Lys-221 the chain carries N6-succinyllysine. The residue at position 233 (Lys-233) is an N6-acetyllysine. Lys-237, Trp-303, His-305, and Lys-306 together coordinate NADP(+). Lys-306 carries the post-translational modification N6-acetyllysine; alternate. At Lys-306 the chain carries N6-succinyllysine; alternate. Residue Tyr-358 coordinates heme. Ser-417 and Ser-422 each carry phosphoserine. Lys-480 carries the post-translational modification N6-acetyllysine; alternate. Lys-480 carries the N6-succinyllysine; alternate modification. An N6-acetyllysine modification is found at Lys-499. Phosphothreonine is present on Thr-511. A phosphoserine mark is found at Ser-515 and Ser-517. The Microbody targeting signal; atypical signature appears at Lys-524–Leu-527.

This sequence belongs to the catalase family. As to quaternary structure, homotetramer. Interacts (via microbody targeting signal) with PEX5, monomeric form interacts with PEX5, leading to its translocation into peroxisomes. Requires heme as cofactor. NADP(+) is required as a cofactor.

The protein localises to the peroxisome matrix. The catalysed reaction is 2 H2O2 = O2 + 2 H2O. Its function is as follows. Catalyzes the degradation of hydrogen peroxide (H(2)O(2)) generated by peroxisomal oxidases to water and oxygen, thereby protecting cells from the toxic effects of hydrogen peroxide. Promotes growth of cells including T-cells, B-cells, myeloid leukemia cells, melanoma cells, mastocytoma cells and normal and transformed fibroblast cells. In Homo sapiens (Human), this protein is Catalase (CAT).